Here is a 203-residue protein sequence, read N- to C-terminus: Small ribosomal subunit protein uS4 (203 aa).

The interval 1-46 is disordered; sequence MSKRQSAKYKLDRRMGENIWGRPKSPVNRREYGPGQHGQRRKGKMS. The 64-residue stretch at 94 to 157 folds into the S4 RNA-binding domain; the sequence is RRLDAVVYRA…QEMALVAEAQ (64 aa).

This sequence belongs to the universal ribosomal protein uS4 family. Part of the 30S ribosomal subunit. Contacts protein S5. The interaction surface between S4 and S5 is involved in control of translational fidelity.

Functionally, one of the primary rRNA binding proteins, it binds directly to 16S rRNA where it nucleates assembly of the body of the 30S subunit. With S5 and S12 plays an important role in translational accuracy. This is Small ribosomal subunit protein uS4 from Sphingopyxis alaskensis (strain DSM 13593 / LMG 18877 / RB2256) (Sphingomonas alaskensis).